The sequence spans 244 residues: Small ribosomal subunit protein eS4 (244 aa).

Residues 1–14 (MANKGPRKHLKRLP) show a composition bias toward basic residues. A disordered region spans residues 1–36 (MANKGPRKHLKRLPAPKNWQISRKTNKYTTRPSAGP). Residues 19–32 (WQISRKTNKYTTRP) are compositionally biased toward polar residues. The 64-residue stretch at 43–106 (LPLLLVLRDL…NESFLVVLDE (64 aa)) folds into the S4 RNA-binding domain.

The protein belongs to the eukaryotic ribosomal protein eS4 family.

This is Small ribosomal subunit protein eS4 from Methanococcus aeolicus (strain ATCC BAA-1280 / DSM 17508 / OCM 812 / Nankai-3).